We begin with the raw amino-acid sequence, 591 residues long: Zinc finger protein 48 (591 aa).

Met-1 bears the N-acetylmethionine mark. 2 disordered regions span residues 1-24 and 55-80; these read MEASPGDEFEHSPQERDGPEIKEE and GLGKRQPRDPVPRILGEPRWGQGSND. Composition is skewed to basic and acidic residues over residues 8–24 and 55–65; these read EFEHSPQERDGPEIKEE and GLGKRQPRDPV. Residue Ser-12 is modified to Phosphoserine. Lys-58 participates in a covalent cross-link: Glycyl lysine isopeptide (Lys-Gly) (interchain with G-Cter in SUMO2). C2H2-type zinc fingers lie at residues 83-105 and 111-133; these read AVCGECGKSFRQMSDLVKHQRTH and YKCGVCGKGFGDSSARIKHQRTH. The disordered stretch occupies residues 131–160; sequence RTHTGEKAYRVRPPAPGPPKMPRSRIPAGE. Residue Lys-150 forms a Glycyl lysine isopeptide (Lys-Gly) (interchain with G-Cter in SUMO2) linkage. C2H2-type zinc fingers lie at residues 163-185 and 191-213; these read TICGECGKSFRQSSDLVKHQRTH and YKCGICGKGFGDSSARIKHQRTH. Positions 206 to 241 are disordered; that stretch reads RIKHQRTHRGDQLPRPVVPRRQPSPAAPAAPHRPKA. Residues 224–235 show a composition bias toward low complexity; sequence PRRQPSPAAPAA. Lys-240 is covalently cross-linked (Glycyl lysine isopeptide (Lys-Gly) (interchain with G-Cter in SUMO2)). 2 C2H2-type zinc fingers span residues 246–268 and 274–296; these read YICTDCGKRFVLSCSLLSHQRSH and FGCDVCGKEFARGSDLVKHLRVH. Lys-300 participates in a covalent cross-link: Glycyl lysine isopeptide (Lys-Gly) (interchain with G-Cter in SUMO2). 2 consecutive C2H2-type zinc fingers follow at residues 302-324 and 330-352; these read YLCPECGKGFADSSARVKHLRTH and HACPECNRSFSLSSTLLRHRLTH. Positions 372-429 are disordered; that stretch reads PPPPPLGTSPSLTPRSPSHSSDGPFGLPGLEPEPGGPQAGEPPPPLAGDKPHKCPECG. Over residues 379–404 the composition is skewed to low complexity; that stretch reads TSPSLTPRSPSHSSDGPFGLPGLEPE. The C2H2-type 9 zinc-finger motif lies at 423–445; that stretch reads HKCPECGKGFRRSSDLVKHHRVH. Residue Lys-449 forms a Glycyl lysine isopeptide (Lys-Gly) (interchain with G-Cter in SUMO2) linkage. Residues 451–473 form a C2H2-type 10 zinc finger; that stretch reads YLCPECGKGFADSSARVKHLRTH. The segment at 464 to 512 is disordered; that stretch reads SARVKHLRTHQGERTRPPPPPSTLLRPHNPPGSVPIVPQSRVQGRPSGP. The segment covering 480-496 has biased composition (pro residues); sequence PPPPPSTLLRPHNPPGS. C2H2-type zinc fingers lie at residues 516–538 and 544–566; these read HVCGFCGKEFPRSSDLVKHRRTH and YKCAECGKGFGDSSARIKHQRGH. The segment at 564–591 is disordered; sequence RGHLALKPFGVGDGPPRPLKEESPAGLE. The segment covering 581 to 591 has biased composition (basic and acidic residues); the sequence is PLKEESPAGLE. Residue Lys-583 forms a Glycyl lysine isopeptide (Lys-Gly) (interchain with G-Cter in SUMO2) linkage.

The protein belongs to the krueppel C2H2-type zinc-finger protein family.

The protein localises to the nucleus. May be involved in transcriptional regulation. This chain is Zinc finger protein 48 (Znf48), found in Mus musculus (Mouse).